A 477-amino-acid polypeptide reads, in one-letter code: MVVGDVTTSTDVLVIGAGPGGYVAAIRAAQLALDVTLVEKGEYGGACLNRGCIPSKALIHGSKLASEAGQAEELGIYADPTVALDEMINWKDGVVDQLTSGIEQLCTAAGVNLLKGTAEFADENKVRIIHQGEGQGSESLKFENCIIATGSRPIEIPGFGFEDERIVSSDGALNFDTVPDELVIVGAGYIGMELATVYSRLGSDVSVIEMLEQALPSYEEDIASIVRKRAERLGVDFHFGYTADSWAASDGKAVLTAVPADEAAHDSDIELTADRILVAVGRRPVTDTLSIDDAGVETNAQGFIPTDSTCRTNKEHIFAVGDVAGEPMLAHKGSKEGEVAAEVIAGEPAAVDYQALPAAVFTDPEIGTVGLTENEAANKGMTPVTGEFQFQASGRALTANRAEGFVRIIATKETERVIGAQIVGPEASELIAEIAAMIEMGAKLEDIGSTVHTHPTLSEAIMEAAQNAREKAIHRRN.

FAD is bound by residues 39–47 (EKGEYGGAC), lysine 56, and alanine 118. A disulfide bond links cysteine 47 and cysteine 52. NAD(+) is bound by residues 186-190 (GAGYI), glutamate 209, and 279-282 (AVGR). Residues aspartate 322 and alanine 330 each coordinate FAD. Histidine 454 (proton acceptor) is an active-site residue.

This sequence belongs to the class-I pyridine nucleotide-disulfide oxidoreductase family. Homodimer. The cofactor is FAD.

Its subcellular location is the cytoplasm. It carries out the reaction N(6)-[(R)-dihydrolipoyl]-L-lysyl-[protein] + NAD(+) = N(6)-[(R)-lipoyl]-L-lysyl-[protein] + NADH + H(+). This Haloarcula marismortui (strain ATCC 43049 / DSM 3752 / JCM 8966 / VKM B-1809) (Halobacterium marismortui) protein is Dihydrolipoyl dehydrogenase 3 (lpdA3).